The sequence spans 533 residues: Subtilisin-like serine protease pepC (533 aa).

Residues 1–16 form the signal peptide; it reads MKGILGLSLLPLLTAA. The Inhibitor I9 domain occupies 43-136; the sequence is SYIVVFKKHV…IERDSEVHTM (94 aa). Positions 145–450 constitute a Peptidase S8 domain; sequence PWGLARISHR…VGIYKRNELT (306 aa). Active-site charge relay system residues include aspartate 181 and histidine 213. Asparagine 283 carries an N-linked (GlcNAc...) asparagine glycan. A disulfide bond links cysteine 320 and cysteine 351. Serine 379 (charge relay system) is an active-site residue. Asparagine 435 carries N-linked (GlcNAc...) asparagine glycosylation. Polar residues predominate over residues 496–513; that stretch reads KSCSPRSLVPSTARSRMP. Residues 496 to 519 form a disordered region; it reads KSCSPRSLVPSTARSRMPSSHRSE.

This sequence belongs to the peptidase S8 family.

The polypeptide is Subtilisin-like serine protease pepC (pepC) (Aspergillus niger).